Consider the following 176-residue polypeptide: Orotate phosphoribosyltransferase (176 aa).

Residues Arg90, Lys91, Lys94, and 116-124 (EDVTTTGGS) each bind 5-phospho-alpha-D-ribose 1-diphosphate. Orotate contacts are provided by Thr120 and Arg148.

Belongs to the purine/pyrimidine phosphoribosyltransferase family. PyrE subfamily. Homodimer. Requires Mg(2+) as cofactor.

It catalyses the reaction orotidine 5'-phosphate + diphosphate = orotate + 5-phospho-alpha-D-ribose 1-diphosphate. Its pathway is pyrimidine metabolism; UMP biosynthesis via de novo pathway; UMP from orotate: step 1/2. Functionally, catalyzes the transfer of a ribosyl phosphate group from 5-phosphoribose 1-diphosphate to orotate, leading to the formation of orotidine monophosphate (OMP). The sequence is that of Orotate phosphoribosyltransferase from Methanocaldococcus jannaschii (strain ATCC 43067 / DSM 2661 / JAL-1 / JCM 10045 / NBRC 100440) (Methanococcus jannaschii).